Reading from the N-terminus, the 46-residue chain is Aspartate aminotransferase 1 (46 aa).

The protein belongs to the class-I pyridoxal-phosphate-dependent aminotransferase family. Homodimer. Requires pyridoxal 5'-phosphate as cofactor.

It carries out the reaction L-aspartate + 2-oxoglutarate = oxaloacetate + L-glutamate. Its function is as follows. Important for the metabolism of amino acids and Krebs-cycle related organic acids. In plants, it is involved in nitrogen metabolism and in aspects of carbon and energy metabolism. This Pseudotsuga menziesii (Douglas-fir) protein is Aspartate aminotransferase 1.